The primary structure comprises 204 residues: uncharacterized protein (204 aa).

This is an uncharacterized protein from Stylonychia lemnae (Ciliate).